The chain runs to 293 residues: Homoserine kinase (293 aa).

83–93 (PITRGMGSSSA) contacts ATP.

It belongs to the GHMP kinase family. Homoserine kinase subfamily.

The protein localises to the cytoplasm. It catalyses the reaction L-homoserine + ATP = O-phospho-L-homoserine + ADP + H(+). It participates in amino-acid biosynthesis; L-threonine biosynthesis; L-threonine from L-aspartate: step 4/5. Functionally, catalyzes the ATP-dependent phosphorylation of L-homoserine to L-homoserine phosphate. This is Homoserine kinase from Helicobacter pylori (strain ATCC 700392 / 26695) (Campylobacter pylori).